A 130-amino-acid chain; its full sequence is Small ribosomal subunit protein uS9 (130 aa).

The segment at 106 to 130 (RDSRKVERKKPGLKKARKASQFSKR) is disordered. The segment covering 111–130 (VERKKPGLKKARKASQFSKR) has biased composition (basic residues).

The protein belongs to the universal ribosomal protein uS9 family.

The protein is Small ribosomal subunit protein uS9 of Streptococcus pneumoniae serotype 2 (strain D39 / NCTC 7466).